We begin with the raw amino-acid sequence, 496 residues long: NADH-quinone oxidoreductase subunit N (496 aa).

Helical transmembrane passes span 12-32 (LNLI…IILI), 43-63 (SLYV…TLGL), 79-99 (VSIV…PLAL), 108-128 (SYPE…FMVA), 132-152 (LILI…LIAL), 166-186 (FTMG…IYAL), 207-227 (GLMI…AFKL), 257-277 (VAAF…GVEW), 280-300 (VVIL…ALVQ), 306-326 (MLAY…ALDT), 333-353 (IFFY…MLWM), 383-403 (AVIM…SIFW), 416-436 (GYVW…YYYL), and 464-484 (AVVG…QPLV).

The protein belongs to the complex I subunit 2 family. As to quaternary structure, NDH-1 is composed of 14 different subunits. Subunits NuoA, H, J, K, L, M, N constitute the membrane sector of the complex.

It localises to the cell inner membrane. It carries out the reaction a quinone + NADH + 5 H(+)(in) = a quinol + NAD(+) + 4 H(+)(out). Its function is as follows. NDH-1 shuttles electrons from NADH, via FMN and iron-sulfur (Fe-S) centers, to quinones in the respiratory chain. The immediate electron acceptor for the enzyme in this species is believed to be ubiquinone. Couples the redox reaction to proton translocation (for every two electrons transferred, four hydrogen ions are translocated across the cytoplasmic membrane), and thus conserves the redox energy in a proton gradient. This chain is NADH-quinone oxidoreductase subunit N, found in Sulfurovum sp. (strain NBC37-1).